The following is a 657-amino-acid chain: Glycogen debranching enzyme (657 aa).

Asp334 acts as the Nucleophile in catalysis. Residue Glu369 is the Proton donor of the active site. Residues 458 to 485 (ANGEQNRDGTNSNFSFNHGTEGLEADET) are disordered. Positions 465 to 475 (DGTNSNFSFNH) are enriched in polar residues.

The protein belongs to the glycosyl hydrolase 13 family.

It localises to the cytoplasm. The enzyme catalyses Hydrolysis of (1-&gt;6)-alpha-D-glucosidic linkages to branches with degrees of polymerization of three or four glucose residues in limit dextrin.. It participates in glycan degradation; glycogen degradation. Slightly activated by Ca(2+). Inhibited by divalent cations such as Zn(2+), Cu(2+), Fe(2+), Mg(2+), Mn(2+), but only slightly inhibited by EDTA. In terms of biological role, removes maltotriose and maltotetraose chains that are attached by 1,6-alpha-linkage to the limit dextrin main chain, generating a debranched limit dextrin. Hydrolyzes the alpha-1,6-glycosidic linkages in amylopectin while does not hydrolyze the alpha-1,4-glycosidic linkages in amylose. Native glycogen is a poor substrate. In Dickeya chrysanthemi (Pectobacterium chrysanthemi), this protein is Glycogen debranching enzyme.